A 212-amino-acid polypeptide reads, in one-letter code: Small ribosomal subunit protein eS1 (212 aa).

Belongs to the eukaryotic ribosomal protein eS1 family.

The chain is Small ribosomal subunit protein eS1 from Ignicoccus hospitalis (strain KIN4/I / DSM 18386 / JCM 14125).